The following is a 166-amino-acid chain: Polyadenylate-binding protein 2 (166 aa).

Positions Gln-55–Thr-132 constitute an RRM domain. The tract at residues Pro-129–Tyr-166 is disordered. The segment covering Gly-140–Ala-160 has biased composition (basic residues).

It localises to the nucleus. This chain is Polyadenylate-binding protein 2 (pab2), found in Schizosaccharomyces pombe (strain 972 / ATCC 24843) (Fission yeast).